The sequence spans 191 residues: Lipid A acyltransferase PagP (191 aa).

Residues 1 to 23 (MRLFYQRISLLISLCGFFSAAWA) form the signal peptide. Residues H62, D105, and S106 contribute to the active site.

The protein belongs to the lipid A palmitoyltransferase family. In terms of assembly, homodimer.

It localises to the cell outer membrane. The enzyme catalyses a lipid A + a 1,2-diacyl-sn-glycero-3-phosphocholine = a hepta-acyl lipid A + a 2-acyl-sn-glycero-3-phosphocholine. The catalysed reaction is a lipid IVA + a 1,2-diacyl-sn-glycero-3-phosphocholine = a lipid IVB + a 2-acyl-sn-glycero-3-phosphocholine. It carries out the reaction a lipid IIA + a 1,2-diacyl-sn-glycero-3-phosphocholine = a lipid IIB + a 2-acyl-sn-glycero-3-phosphocholine. Transfers a fatty acid residue from the sn-1 position of a phospholipid to the N-linked hydroxyfatty acid chain on the proximal unit of lipid A or its precursors. The protein is Lipid A acyltransferase PagP of Sodalis glossinidius (strain morsitans).